The primary structure comprises 434 residues: 3-phosphoshikimate 1-carboxyvinyltransferase (434 aa).

3-phosphoshikimate-binding residues include lysine 22, serine 23, and arginine 27. Lysine 22 is a binding site for phosphoenolpyruvate. Glycine 93 and arginine 121 together coordinate phosphoenolpyruvate. 6 residues coordinate 3-phosphoshikimate: serine 168, serine 169, glutamine 170, serine 199, aspartate 320, and lysine 347. Residue glutamine 170 participates in phosphoenolpyruvate binding. The active-site Proton acceptor is the aspartate 320. Phosphoenolpyruvate contacts are provided by arginine 351, arginine 394, and lysine 419.

Belongs to the EPSP synthase family. As to quaternary structure, monomer.

The protein localises to the cytoplasm. The enzyme catalyses 3-phosphoshikimate + phosphoenolpyruvate = 5-O-(1-carboxyvinyl)-3-phosphoshikimate + phosphate. It functions in the pathway metabolic intermediate biosynthesis; chorismate biosynthesis; chorismate from D-erythrose 4-phosphate and phosphoenolpyruvate: step 6/7. Catalyzes the transfer of the enolpyruvyl moiety of phosphoenolpyruvate (PEP) to the 5-hydroxyl of shikimate-3-phosphate (S3P) to produce enolpyruvyl shikimate-3-phosphate and inorganic phosphate. The chain is 3-phosphoshikimate 1-carboxyvinyltransferase from Paraburkholderia phymatum (strain DSM 17167 / CIP 108236 / LMG 21445 / STM815) (Burkholderia phymatum).